The sequence spans 32 residues: Ribulose bisphosphate carboxylase/oxygenase activase, chloroplastic (32 aa).

The segment at 13-32 is disordered; that stretch reads FGALREGPPTFEQPAMTIEK.

Belongs to the RuBisCO activase family.

The protein localises to the plastid. Its subcellular location is the chloroplast stroma. In terms of biological role, activation of RuBisCO (ribulose-1,5-bisphosphate carboxylase/oxygenase; EC 4.1.1.39) involves the ATP-dependent carboxylation of the epsilon-amino group of lysine leading to a carbamate structure. In Populus euphratica (Euphrates poplar), this protein is Ribulose bisphosphate carboxylase/oxygenase activase, chloroplastic.